The chain runs to 134 residues: Small ribosomal subunit protein uS9c (134 aa).

The interval 105–134 is disordered; sequence QGYLTRNPLRKERKKYGLKKARKAPQFSKR. Over residues 115–134 the composition is skewed to basic residues; it reads KERKKYGLKKARKAPQFSKR.

The protein belongs to the universal ribosomal protein uS9 family.

Its subcellular location is the plastid. It is found in the chloroplast. This Nephroselmis olivacea (Green alga) protein is Small ribosomal subunit protein uS9c (rps9).